A 213-amino-acid polypeptide reads, in one-letter code: Kynurenine formamidase (213 aa).

Residue Trp-18 coordinates substrate. Residues His-48, His-52, and Asp-54 each contribute to the Zn(2+) site. His-58 functions as the Proton donor/acceptor in the catalytic mechanism. Zn(2+) contacts are provided by His-160 and Glu-172.

It belongs to the Cyclase 1 superfamily. KynB family. Homodimer. It depends on Zn(2+) as a cofactor.

It catalyses the reaction N-formyl-L-kynurenine + H2O = L-kynurenine + formate + H(+). Its pathway is amino-acid degradation; L-tryptophan degradation via kynurenine pathway; L-kynurenine from L-tryptophan: step 2/2. Catalyzes the hydrolysis of N-formyl-L-kynurenine to L-kynurenine, the second step in the kynurenine pathway of tryptophan degradation. The chain is Kynurenine formamidase from Burkholderia lata (strain ATCC 17760 / DSM 23089 / LMG 22485 / NCIMB 9086 / R18194 / 383).